The sequence spans 367 residues: MDADAILKKDQRRSSLKQRNLLLSMRLNQTTATNGAPPQARVQPGKGYRNPGKVLSPIRNQEMSPGKRPTLEISELKNVSPINQAHKTGKARAGGVPLSKLQNLKLADFEIGKVLGKGKFGRVYCVRHIESGFVCALKAMEKKDIIQYNIEKQFRREVEIQSSLRHPNLTQLYGYFHDEKRVYLLMEYLVNGELYKHLKGRSHFNDVVASYYVYQMADALDYMHERNILHRDIKPENIIIGFNNTIKLTDFGWSVITPKGSKRKTLCGTVDYLSPELIRSREYNEKVDVWALGVLTYELLVGSPPFEEESKELTYKRILKRNLIFPDHVDTEARHLISRLLEYDPGDRIPLKEVKKHPWIEKNKPFW.

Residues 30–49 (TTATNGAPPQARVQPGKGYR) form a disordered region. Positions 109–360 (FEIGKVLGKG…LKEVKKHPWI (252 aa)) constitute a Protein kinase domain. ATP-binding positions include 115-123 (LGKGKFGRV) and lysine 138. Aspartate 232 serves as the catalytic Proton acceptor.

The protein belongs to the protein kinase superfamily. Ser/Thr protein kinase family. Aurora subfamily.

It localises to the nucleus. Its subcellular location is the cytoplasm. The protein localises to the cytoskeleton. It is found in the spindle. The protein resides in the chromosome. It localises to the centromere. Its subcellular location is the kinetochore. The catalysed reaction is L-seryl-[protein] + ATP = O-phospho-L-seryl-[protein] + ADP + H(+). The enzyme catalyses L-threonyl-[protein] + ATP = O-phospho-L-threonyl-[protein] + ADP + H(+). Its function is as follows. Component of the chromosomal passenger complex (CPC), a complex that acts as a key regulator of chromosome segregation and cytokinesis. Has a role in error-correction of aberrent kinetochore-microtubule attachments to ensure that sister kinetochores become bioriented and connect to opposite poles by promoting spindle assembly checkpoint signaling. The polypeptide is Aurora kinase (IPL1) (Eremothecium gossypii (strain ATCC 10895 / CBS 109.51 / FGSC 9923 / NRRL Y-1056) (Yeast)).